We begin with the raw amino-acid sequence, 238 residues long: Probable transcriptional regulatory protein SSU98_0387 (238 aa).

The protein belongs to the TACO1 family. YeeN subfamily.

The protein localises to the cytoplasm. This chain is Probable transcriptional regulatory protein SSU98_0387, found in Streptococcus suis (strain 98HAH33).